A 623-amino-acid polypeptide reads, in one-letter code: E3 ubiquitin-protein ligase DTX1 (623 aa).

2 WWE domains span residues 13–93 (HNFG…PVRR) and 94–170 (NFFE…RLRR). The disordered stretch occupies residues 224–319 (KVPSGPPPAL…RASIPPGVPA (96 aa)). A compositionally biased stretch (pro residues) spans 227–242 (SGPPPALPPPPPPPIH). Residues 292–311 (GQNNLNRPGEQRTSGSSSRA) show a composition bias toward polar residues. Residues 413–474 (CTICMERLVT…DGSLQCPTCK (62 aa)) form an RING-type zinc finger.

It belongs to the Deltex family. In terms of assembly, may form a homo- or heterodimer with other members of the Deltex family. Probably interacts with Notch1. Specifically expressed in regions undergoing neuronal differentiation. Mainly colocalizes with Notch1.

The enzyme catalyses S-ubiquitinyl-[E2 ubiquitin-conjugating enzyme]-L-cysteine + [acceptor protein]-L-lysine = [E2 ubiquitin-conjugating enzyme]-L-cysteine + N(6)-ubiquitinyl-[acceptor protein]-L-lysine.. Its pathway is protein modification; protein ubiquitination. Regulator of Notch signaling, a signaling pathway involved in cell-cell communications that regulates a broad spectrum of cell-fate determinations. Probably acts both as a positive and negative regulator of Notch, depending on the developmental and cell context. Functions as a ubiquitin ligase protein in vivo, mediating ubiquitination and promoting degradation of MEKK1, suggesting that it may regulate the Notch pathway via some ubiquitin ligase activity. This Xenopus laevis (African clawed frog) protein is E3 ubiquitin-protein ligase DTX1 (dtx1).